The following is a 934-amino-acid chain: Serine/threonine-protein kinase KIPK1 (934 aa).

Disordered regions lie at residues 20–40 (LPKHSGRYGKSVMGSSSKDLV), 70–113 (RLMS…RFVG), 189–227 (PLMPVNDKPSSSKSVPQRFEDPSNPISEPSQAGTSFGLQ), 305–343 (SSSAVDSEQKGKLDDAPNSGTENGKTVRKVTRMIPRPKQ), 395–438 (SIDD…SCNV), and 466–493 (EKETENPTSSEKFEFSLSSKDSLGDYSR). Polar residues-rich tracts occupy residues 82–94 (SASAGPSRTTSPS) and 212–227 (NPISEPSQAGTSFGLQ). The segment covering 395–421 (SIDDNPPSYTSSHNPKICTDSLSSVSN) has biased composition (polar residues). In terms of domain architecture, Protein kinase spans 538–879 (FNLLKKLGCG…SVEIKRHPFF (342 aa)). Residues 544–552 (LGCGDIGTV) and lysine 567 contribute to the ATP site. The Proton acceptor role is filled by aspartate 663. Residues 738–773 (SSNQQQGRKPKRGDHLSKTQQHLSRSLPQLVAEPTE) are disordered. The segment covering 755–764 (KTQQHLSRSL) has biased composition (polar residues).

This sequence belongs to the protein kinase superfamily. Ser/Thr protein kinase family. As to quaternary structure, interacts with KCBP. Interacts with PERK8, PERK9, PERK10 and PERK13. Autophosphorylated. Expressed in roots, cauline leaves, flowers and siliques.

The protein localises to the cytoplasm. It is found in the nucleus. It catalyses the reaction L-seryl-[protein] + ATP = O-phospho-L-seryl-[protein] + ADP + H(+). The enzyme catalyses L-threonyl-[protein] + ATP = O-phospho-L-threonyl-[protein] + ADP + H(+). Its function is as follows. Could be involved in the negative regulation of root growth. The sequence is that of Serine/threonine-protein kinase KIPK1 from Arabidopsis thaliana (Mouse-ear cress).